A 144-amino-acid chain; its full sequence is Large ribosomal subunit protein uL11 (144 aa).

The protein belongs to the universal ribosomal protein uL11 family. Part of the ribosomal stalk of the 50S ribosomal subunit. Interacts with L10 and the large rRNA to form the base of the stalk. L10 forms an elongated spine to which L12 dimers bind in a sequential fashion forming a multimeric L10(L12)X complex. Post-translationally, one or more lysine residues are methylated.

Forms part of the ribosomal stalk which helps the ribosome interact with GTP-bound translation factors. In Streptomyces griseus subsp. griseus (strain JCM 4626 / CBS 651.72 / NBRC 13350 / KCC S-0626 / ISP 5235), this protein is Large ribosomal subunit protein uL11.